A 1387-amino-acid chain; its full sequence is Magnesium-chelatase subunit ChlH, chloroplastic (1387 aa).

The transit peptide at 1–50 (MSSLVSTPFTTATGVQKKLGAPVPLHSFLLSRRQPAAGAGRGRAAAAAIR) directs the protein to the chloroplast.

The protein belongs to the Mg-chelatase subunit H family. As to quaternary structure, the magnesium chelatase complex is a heterotrimer consisting of subunits CHLI, CHLD and CHLH.

The protein localises to the plastid. It localises to the chloroplast stroma. Its subcellular location is the chloroplast membrane. The enzyme catalyses protoporphyrin IX + Mg(2+) + ATP + H2O = Mg-protoporphyrin IX + ADP + phosphate + 3 H(+). It functions in the pathway porphyrin-containing compound metabolism; chlorophyll biosynthesis. In terms of biological role, involved in chlorophyll biosynthesis. Catalyzes the insertion of magnesium ion into protoporphyrin IX to yield Mg-protoporphyrin IX. The reaction takes place in two steps, with an ATP-dependent activation followed by an ATP-dependent chelation step. May be involved in the plastid-to-nucleus retrograde signaling. The sequence is that of Magnesium-chelatase subunit ChlH, chloroplastic (CHLH) from Oryza sativa subsp. japonica (Rice).